A 173-amino-acid chain; its full sequence is MAQNNVYLILFLCLMFLSYSQGQVAEEDFPLAEKDLPSAKINCPEGANAYGSYCYYLIEDRLTWGEADLFCQNMNAGHLVSILSQAESNFVASLVKESGTTASNVWTGLHDPKSNRRWHWSSGSLFLFKSWATGAPSTANRGYCVSLTSNTAYKKWKDENCEAQYSFVCKFRA.

The first 22 residues, Met1–Gly22, serve as a signal peptide directing secretion. The C-type lectin domain maps to Ile41–Phe171. 3 disulfides stabilise this stretch: Cys43-Cys54, Cys71-Cys169, and Cys144-Cys161.

Expressed only in regenerating islets and normal exocrine pancreas, but not in normal pancreatic islets. Expressed strongly in pancreas, weakly in liver, but not at all in gall bladder.

It localises to the secreted. Might act as an inhibitor of spontaneous calcium carbonate precipitation. This chain is Lithostathine-2 (Reg2), found in Mus musculus (Mouse).